The primary structure comprises 390 residues: Magnesium-protoporphyrin IX monomethyl ester [oxidative] cyclase (390 aa).

The protein belongs to the AcsF family. It depends on Fe cation as a cofactor.

The enzyme catalyses Mg-protoporphyrin IX 13-monomethyl ester + 3 NADPH + 3 O2 + 2 H(+) = 3,8-divinyl protochlorophyllide a + 3 NADP(+) + 5 H2O. It participates in porphyrin-containing compound metabolism; chlorophyll biosynthesis (light-independent). Catalyzes the formation of the isocyclic ring in chlorophyll biosynthesis. Mediates the cyclase reaction, which results in the formation of divinylprotochlorophyllide (Pchlide) characteristic of all chlorophylls from magnesium-protoporphyrin IX 13-monomethyl ester (MgPMME). This chain is Magnesium-protoporphyrin IX monomethyl ester [oxidative] cyclase, found in Prochlorococcus marinus (strain MIT 9215).